The chain runs to 191 residues: MSAKIILVFCAQALFVQSALSQCTSRATVAADRGIIGGYGLGAPYGLAYGLEAPLGLGYGLGAPCGLAGPAIDITPTIGGGLPVSSASAIAPVGLVVASENVYEGILAAAGELPFVGTVGVEGVLPTAGAGAVHHSCGDGINAMASRDAAFAPGYAGAHGIGLGAYGLGVPALEVPALGYRAGWRGCGCGL.

Positions 1 to 21 (MSAKIILVFCAQALFVQSALS) are cleaved as a signal peptide.

It belongs to the chorion protein family.

In terms of biological role, this protein is one of many from the eggshell of the gypsy moth. The sequence is that of Chorion class B protein Ld10 from Lymantria dispar (Gypsy moth).